The primary structure comprises 354 residues: Uroporphyrinogen decarboxylase (354 aa).

Residues 27–31, Asp-77, Tyr-154, Ser-209, and His-327 each bind substrate; that span reads RQAGR.

This sequence belongs to the uroporphyrinogen decarboxylase family. In terms of assembly, homodimer.

It is found in the cytoplasm. The catalysed reaction is uroporphyrinogen III + 4 H(+) = coproporphyrinogen III + 4 CO2. Its pathway is porphyrin-containing compound metabolism; protoporphyrin-IX biosynthesis; coproporphyrinogen-III from 5-aminolevulinate: step 4/4. In terms of biological role, catalyzes the decarboxylation of four acetate groups of uroporphyrinogen-III to yield coproporphyrinogen-III. In Shewanella sp. (strain ANA-3), this protein is Uroporphyrinogen decarboxylase.